Here is a 128-residue protein sequence, read N- to C-terminus: Transcription antitermination protein NusB (128 aa).

The protein belongs to the NusB family.

Involved in transcription antitermination. Required for transcription of ribosomal RNA (rRNA) genes. Binds specifically to the boxA antiterminator sequence of the ribosomal RNA (rrn) operons. This chain is Transcription antitermination protein NusB, found in Listeria monocytogenes serotype 4a (strain HCC23).